The primary structure comprises 350 residues: Aldo-keto reductase 1B (350 aa).

Tyrosine 84 functions as the Proton donor in the catalytic mechanism. Histidine 146 is a substrate binding site. 244–306 serves as a coordination point for NADP(+); that stretch reads SPLGSPNRPW…SVTKDRIESN (63 aa).

It belongs to the aldo/keto reductase family.

The protein resides in the cytoplasm. The catalysed reaction is an alditol + NADP(+) = an aldose + NADPH + H(+). The enzyme catalyses all-trans-retinol + NADP(+) = all-trans-retinal + NADPH + H(+). It carries out the reaction 9-cis-retinol + NADP(+) = 9-cis-retinal + NADPH + H(+). It catalyses the reaction 13-cis-retinol + NADP(+) = 13-cis-retinal + NADPH + H(+). The catalysed reaction is glycerol + NADP(+) = D-glyceraldehyde + NADPH + H(+). The enzyme catalyses glycerol + NADP(+) = L-glyceraldehyde + NADPH + H(+). It carries out the reaction prenol + NADP(+) = 3-methyl-2-butenal + NADPH + H(+). It catalyses the reaction (E)-hex-2-en-1-ol + NADP(+) = (E)-hex-2-enal + NADPH + H(+). The catalysed reaction is (E,E)-2,4-hexadien-1-ol + NADP(+) = (E,E)-2,4-hexadienal + NADPH + H(+). The enzyme catalyses a 4-hydroxynonen-1-ol + NADP(+) = a 4-hydroxynonenal + NADPH + H(+). It carries out the reaction prostaglandin F2alpha + NADP(+) = prostaglandin H2 + NADPH + H(+). It catalyses the reaction allyl alcohol + NADP(+) = acrolein + NADPH + H(+). The catalysed reaction is pyridine 3-methanol + NADP(+) = pyridine-3-carbaldehyde + NADPH + H(+). The enzyme catalyses 1-hexadecanoyl-2-(5-oxopentanoyl)-sn-glycero-3-phosphocholine + NADPH + H(+) = 1-hexadecanoyl-2-(5-hydroxypentanoyl)-sn-glycero-3-phosphocholine + NADP(+). It carries out the reaction 1-hexadecanoyl-2-(7-oxoheptanoyl)-sn-glycero-3-phosphocholine + NADPH + H(+) = 1-hexadecanoyl-2-(7-hydroxyheptanoyl)-sn-glycero-3-phosphocholine + NADP(+). It catalyses the reaction 1-hexadecanoyl-2-(9-oxononanoyl)-sn-glycero-3-phosphocholine + NADPH + H(+) = 1-hexadecanoyl-2-(9-hydroxynonanoyl)-sn-glycero-3-phosphocholine + NADP(+). The catalysed reaction is 1-hexadecanoyl-2-(5-oxopentanoyl)-sn-glycero-3-phosphoethanolamine + NADPH + H(+) = 1-hexadecanoyl-2-(5-hydroxypentanoyl)-sn-glycero-3-phosphoethanolamine + NADP(+). In terms of biological role, catalyzes the NADPH-dependent reduction of a wide variety of carbonyl-containing compounds to their corresponding alcohols. Displays enzymatic activity towards endogenous metabolites such as aromatic and aliphatic aldehydes, ketones, monosaccharides, bile acids and xenobiotics substrates. Key enzyme in the polyol pathway, catalyzes reduction of glucose to sorbitol during hyperglycemia. Reduces steroids and their derivatives and prostaglandins. Through production of prostaglandin F2alpha may regulate the activity of non-muscle myosin II in an autocrine or paracrine fashion; influences border cell and nurse cell stiffness to facilitate border cell cluster migration. Also regulates the cell surface localization of integrins in an autocrine or paracrine fashion; influences border cell adhesion to maintain border cell cluster morphology. In hemocytes, probably contributes to production of sugar alcohols in the hemolymph, which act as alarmins involved in gut-fat body innate immunological communication (GFIC); leads to activation of the imd/Relish signaling pathway in the fat body. The polypeptide is Aldo-keto reductase 1B (Drosophila melanogaster (Fruit fly)).